Consider the following 665-residue polypeptide: MKKVKQIRVLKPFDLLSEELVFIILDLISPNPSDLKSFSLTCKSFYQLESKHRGSLKPLRSDYLPRILTRYRNTTDLDLTFCPRVTDYALSVVGCLSGPTLRSLDLSRSGSFSAAGLLRLALKCVNLVEIDLSNATEMRDADAAVVAEARSLERLKLGRCKMLTDMGIGCIAVGCKKLNTVSLKWCVGVGDLGVGLLAVKCKDIRTLDLSYLPITGKCLHDILKLQHLEELLLEGCFGVDDDSLKSLRHDCKSLKKLDASSCQNLTHRGLTSLLSGAGYLQRLDLSHCSSVISLDFASSLKKVSALQSIRLDGCSVTPDGLKAIGTLCNSLKEVSLSKCVSVTDEGLSSLVMKLKDLRKLDITCCRKLSRVSITQIANSCPLLVSLKMESCSLVSREAFWLIGQKCRLLEELDLTDNEIDDEGLKSISSCLSLSSLKLGICLNITDKGLSYIGMGCSNLRELDLYRSVGITDVGISTIAQGCIHLETINISYCQDITDKSLVSLSKCSLLQTFESRGCPNITSQGLAAIAVRCKRLAKVDLKKCPSINDAGLLALAHFSQNLKQINVSDTAVTEVGLLSLANIGCLQNIAVVNSSGLRPSGVAAALLGCGGLRKAKLHASLRSLLPLSLIHHLEARGCAFLWKDNTLQAELDPKYWKQQLEEMAP.

Positions 11–60 constitute an F-box domain; sequence KPFDLLSEELVFIILDLISPNPSDLKSFSLTCKSFYQLESKHRGSLKPLR. LRR repeat units lie at residues 61–81, 82–108, 109–134, 135–159, 160–185, 186–211, 214–235, 236–261, 262–287, 288–312, 313–338, 339–364, 365–390, 391–416, 419–440, 441–466, 467–492, 493–517, 518–543, 544–569, and 594–619; these read SDYL…DLTF, CPRV…DLSR, SGSF…DLSN, ATEM…KLGR, CKML…SLKW, CVGV…DLSY, ITGK…LLEG, CFGV…DASS, CQNL…DLSH, CSSV…IRLD, GCSV…SLSK, CVSV…DITC, CRKL…KMES, CSLV…DLTD, IDDE…KLGI, CLNI…DLYR, SVGI…NISY, CQDI…ESRG, CPNI…DLKK, CPSI…NVSD, and SSGL…KLHA.

This chain is F-box/LRR-repeat protein 3 (FBL3), found in Arabidopsis thaliana (Mouse-ear cress).